Reading from the N-terminus, the 85-residue chain is Large ribosomal subunit protein bL27 (85 aa).

Residues 1-26 (MAHKKAGGSTRNGRDSESKRLGVKRF) form a disordered region.

The protein belongs to the bacterial ribosomal protein bL27 family.

The protein is Large ribosomal subunit protein bL27 of Saccharophagus degradans (strain 2-40 / ATCC 43961 / DSM 17024).